A 793-amino-acid polypeptide reads, in one-letter code: Protocadherin beta-7 (793 aa).

An N-terminal signal peptide occupies residues M1–A26. Topologically, residues G27–L688 are extracellular. Cadherin domains lie at V35–F133, I138–F242, Y247–L347, L352–F451, and Y456–V561. N169 carries N-linked (GlcNAc...) asparagine glycosylation. N-linked (GlcNAc...) asparagine glycosylation is found at N418 and N436. N567 carries an N-linked (GlcNAc...) asparagine glycan. One can recognise a Cadherin 6 domain in the interval S568–L671. A helical transmembrane segment spans residues V689–V709. Topologically, residues R710 to F793 are cytoplasmic.

It localises to the cell membrane. Potential calcium-dependent cell-adhesion protein. May be involved in the establishment and maintenance of specific neuronal connections in the brain. In Homo sapiens (Human), this protein is Protocadherin beta-7 (PCDHB7).